The following is a 374-amino-acid chain: Chaperone protein DnaJ (374 aa).

One can recognise a J domain in the interval 5–70 (CYYEILNVSK…SKRSRYDQFG (66 aa)). A CR-type zinc finger spans residues 130 to 207 (GVEKEITIPR…CYGNGKVKKQ (78 aa)). Positions 143, 146, 159, 162, 181, 184, 195, and 198 each coordinate Zn(2+). 4 CXXCXGXG motif repeats span residues 143 to 150 (CDSCDGTG), 159 to 166 (CHACHGQG), 181 to 188 (CPVCNGTG), and 195 to 202 (CDACYGNG).

It belongs to the DnaJ family. As to quaternary structure, homodimer. It depends on Zn(2+) as a cofactor.

The protein localises to the cytoplasm. Participates actively in the response to hyperosmotic and heat shock by preventing the aggregation of stress-denatured proteins and by disaggregating proteins, also in an autonomous, DnaK-independent fashion. Unfolded proteins bind initially to DnaJ; upon interaction with the DnaJ-bound protein, DnaK hydrolyzes its bound ATP, resulting in the formation of a stable complex. GrpE releases ADP from DnaK; ATP binding to DnaK triggers the release of the substrate protein, thus completing the reaction cycle. Several rounds of ATP-dependent interactions between DnaJ, DnaK and GrpE are required for fully efficient folding. Also involved, together with DnaK and GrpE, in the DNA replication of plasmids through activation of initiation proteins. This chain is Chaperone protein DnaJ, found in Francisella tularensis subsp. tularensis (strain FSC 198).